Consider the following 170-residue polypeptide: NADPH-dependent 7-cyano-7-deazaguanine reductase (170 aa).

Cysteine 58 serves as the catalytic Thioimide intermediate. The Proton donor role is filled by aspartate 65. Substrate contacts are provided by residues 80-82 and 99-100; these read VES and HE.

It belongs to the GTP cyclohydrolase I family. QueF type 1 subfamily.

Its subcellular location is the cytoplasm. The catalysed reaction is 7-aminomethyl-7-carbaguanine + 2 NADP(+) = 7-cyano-7-deazaguanine + 2 NADPH + 3 H(+). It participates in tRNA modification; tRNA-queuosine biosynthesis. Its function is as follows. Catalyzes the NADPH-dependent reduction of 7-cyano-7-deazaguanine (preQ0) to 7-aminomethyl-7-deazaguanine (preQ1). The protein is NADPH-dependent 7-cyano-7-deazaguanine reductase of Bdellovibrio bacteriovorus (strain ATCC 15356 / DSM 50701 / NCIMB 9529 / HD100).